We begin with the raw amino-acid sequence, 556 residues long: Protein F37C4.5 (556 aa).

Ala2 is subject to N-acetylalanine.

The chain is Protein F37C4.5 from Caenorhabditis elegans.